The chain runs to 365 residues: MLQQQALPGTPRQDGFFMPAEWAPQDAVWMLWPYRQDNWRGKAIPAQQTFAKVAEAISRATPVFMGVPAEFMAQAKATMPANVTLVEMASDDAWMRDTGPTMVINGAAERRAVDWQFNAWGGLNGGLYADWQQDEKVAVQVSDFLKNAHYSAPLILEGGSIHTDGEGTLLTTAECLLNPNRNPHLNQAQIEQLLCDYLGVTHFIWLQDGVYNDETDGHIDNMCCFVRPGEVALHWTDDQQDPQYARSVAAFEVLSNTVDAKGRKLKIWKLPAPGPLYNTEEETFDVLTSDAVPRTAGERLAGSYVNFLISNQQIIFPLLDSRTDGQANDLLQQMFPGYAIVGVPAREILLGGGNIHCITQQIPAA.

Catalysis depends on cysteine 357, which acts as the Amidino-cysteine intermediate.

It belongs to the agmatine deiminase family.

The enzyme catalyses agmatine + H2O = N-carbamoylputrescine + NH4(+). The chain is Putative agmatine deiminase from Yersinia pseudotuberculosis serotype O:1b (strain IP 31758).